A 491-amino-acid polypeptide reads, in one-letter code: Trigger factor (491 aa).

Residues 169-254 form the PPIase FKBP-type domain; it reads GDRVTIDYLG…VKDVAAAAPI (86 aa). The tract at residues 433–491 is disordered; sequence KTVSKDELMAEDEAEDKPAKKAPAKKKAAAKAEAGEGEEAAAPKKKAPAKKKAADDSAE. Residues 452-461 are compositionally biased toward basic residues; sequence KKAPAKKKAA.

The protein belongs to the FKBP-type PPIase family. Tig subfamily.

The protein resides in the cytoplasm. It carries out the reaction [protein]-peptidylproline (omega=180) = [protein]-peptidylproline (omega=0). Its function is as follows. Involved in protein export. Acts as a chaperone by maintaining the newly synthesized protein in an open conformation. Functions as a peptidyl-prolyl cis-trans isomerase. This Sinorhizobium fredii (strain NBRC 101917 / NGR234) protein is Trigger factor.